Consider the following 417-residue polypeptide: Neuropeptide FF receptor 2 (417 aa).

The Extracellular portion of the chain corresponds to 1 to 45; the sequence is MSEKWDSNSSESWNHIWSGNDTQHHWYSDINITYVNYYLHQPQVA. N-linked (GlcNAc...) asparagine glycans are attached at residues Asn8, Asn20, and Asn31. The chain crosses the membrane as a helical span at residues 46 to 66; sequence AVFISSYLLIFVLCMVGNTVV. Residues 67 to 82 are Cytoplasmic-facing; sequence CFIVIRNRHMHTVTNF. Residues 83 to 103 traverse the membrane as a helical segment; it reads FILNLAISDLLVGIFCMPITL. The Extracellular portion of the chain corresponds to 104–119; the sequence is LDNIIAGWPFGSSMCK. Cys118 and Cys206 are disulfide-bonded. A helical transmembrane segment spans residues 120–140; sequence ISGLVQGISVAASVFTLVAIA. The Cytoplasmic segment spans residues 141 to 160; that stretch reads VDRFRCVVYPFKPKLTVKTA. The helical transmembrane segment at 161-181 threads the bilayer; the sequence is FVTIVIIWGLAIAIMTPSAIM. The Extracellular segment spans residues 182–217; that stretch reads LHVQEEKYYRVRLSSHNKTSTVYWCREDWPRHEMRR. Residue Asn198 is glycosylated (N-linked (GlcNAc...) asparagine). A helical membrane pass occupies residues 218 to 238; the sequence is IYTTVLFATIYLAPLSLIVIM. Residues 239 to 274 are Cytoplasmic-facing; the sequence is YARIGASLFKTAAHCTGKQRPVQWHVSKKKQKVIKM. Residues 275–295 form a helical membrane-spanning segment; that stretch reads LLTVALLFILSWLPLWTLMML. Residues 296–310 lie on the Extracellular side of the membrane; the sequence is SDYTDLSPNKLRIIN. Residues 311–331 traverse the membrane as a helical segment; the sequence is IYIYPFAHWLAFCNSSVNPII. The Cytoplasmic portion of the chain corresponds to 332-417; it reads YGFFNENFRN…MGEATNSTVA (86 aa). Residues 382–401 form a disordered region; it reads SQNPGGENLGCGKSADNPTQ.

The protein belongs to the G-protein coupled receptor 1 family.

Its subcellular location is the cell membrane. Receptor for NPAF (A-18-F-amide) and NPFF (F-8-F-amide) neuropeptides, also known as morphine-modulating peptides. Can also be activated by a variety of naturally occurring or synthetic FMRF-amide like ligands. This receptor mediates its action by association with G proteins that activate a phosphatidylinositol-calcium second messenger system. This Mus musculus (Mouse) protein is Neuropeptide FF receptor 2 (Npffr2).